The sequence spans 69 residues: Neuropeptide-like protein 30 (69 aa).

Positions 1–22 (MISTSSILILVVLLACFMAASA) are cleaved as a signal peptide. 4 positions are modified to tyrosine amide: Tyr-29, Tyr-39, Tyr-46, and Tyr-53. Tryptophan amide is present on residues Trp-58 and Trp-67.

This sequence belongs to the YARP (YGGW-amide related peptide) family. As to expression, expressed in hypoderm.

It is found in the secreted. In terms of biological role, may have antimicrobial activity. May play a role in response to fungal infection. The protein is Neuropeptide-like protein 30 (nlp-30) of Caenorhabditis elegans.